A 60-amino-acid polypeptide reads, in one-letter code: Large ribosomal subunit protein bL32 (60 aa).

Belongs to the bacterial ribosomal protein bL32 family.

This Oenococcus oeni (strain ATCC BAA-331 / PSU-1) protein is Large ribosomal subunit protein bL32.